Reading from the N-terminus, the 630-residue chain is Chaperone protein DnaK (630 aa).

At threonine 197 the chain carries Phosphothreonine; by autocatalysis. A compositionally biased stretch (polar residues) spans 604–618 (KNNESVKNNESVKNN). Positions 604–630 (KNNESVKNNESVKNNESVKDVDFEEIK) are disordered. Residues 619-630 (ESVKDVDFEEIK) are compositionally biased toward basic and acidic residues.

Belongs to the heat shock protein 70 family.

Acts as a chaperone. The chain is Chaperone protein DnaK from Karelsulcia muelleri (strain GWSS) (Sulcia muelleri).